A 204-amino-acid polypeptide reads, in one-letter code: Large ribosomal subunit protein uL4 (204 aa).

Positions 44-76 are disordered; it reads KRQGTQSAKTRSEVRGGGIKPWRQKGTGRARQG.

Belongs to the universal ribosomal protein uL4 family. In terms of assembly, part of the 50S ribosomal subunit.

One of the primary rRNA binding proteins, this protein initially binds near the 5'-end of the 23S rRNA. It is important during the early stages of 50S assembly. It makes multiple contacts with different domains of the 23S rRNA in the assembled 50S subunit and ribosome. In terms of biological role, forms part of the polypeptide exit tunnel. The sequence is that of Large ribosomal subunit protein uL4 from Clostridium perfringens (strain ATCC 13124 / DSM 756 / JCM 1290 / NCIMB 6125 / NCTC 8237 / Type A).